An 85-amino-acid chain; its full sequence is Large ribosomal subunit protein bL27 (85 aa).

Residues 1–20 form a disordered region; the sequence is MAHKKAGGSTRNGRDSEAKR.

The protein belongs to the bacterial ribosomal protein bL27 family.

This chain is Large ribosomal subunit protein bL27, found in Proteus mirabilis (strain HI4320).